A 500-amino-acid polypeptide reads, in one-letter code: Palmitoleoyl-protein carboxylesterase notum1a (500 aa).

The N-terminal stretch at 1 to 26 is a signal peptide; it reads MKRSLWVMQVLHWAVMLALVQCGALG. An N-linked (GlcNAc...) asparagine glycan is attached at N101. Residues S237, D344, and H393 each act as charge relay system in the active site.

It belongs to the pectinacetylesterase family. Notum subfamily.

The protein localises to the secreted. It catalyses the reaction [Wnt protein]-O-(9Z)-hexadecenoyl-L-serine + H2O = [Wnt protein]-L-serine + (9Z)-hexadecenoate + H(+). In terms of biological role, carboxylesterase that acts as a key negative regulator of the Wnt signaling pathway. Acts by specifically mediating depalmitoleoylation of WNT proteins. Serine palmitoleoylation of WNT proteins is required for efficient binding to frizzled receptors. This chain is Palmitoleoyl-protein carboxylesterase notum1a, found in Danio rerio (Zebrafish).